Reading from the N-terminus, the 138-residue chain is MVSEIIKLIEEGKIEEVLKKVEEIKGDAQLEIIALTLIEKGYCDEAVKVAEKISSFGLKDEVLRKVAIAYIENGEIDKAMALVEKIKTETDLEKIAMKLIEIKKYREALKVAEKIKSRAIKEGILMAIINALLDELGK.

This is an uncharacterized protein from Methanocaldococcus jannaschii (strain ATCC 43067 / DSM 2661 / JAL-1 / JCM 10045 / NBRC 100440) (Methanococcus jannaschii).